The primary structure comprises 236 residues: Endonuclease NucS (236 aa).

This sequence belongs to the NucS endonuclease family.

The protein localises to the cytoplasm. Cleaves both 3' and 5' ssDNA extremities of branched DNA structures. The polypeptide is Endonuclease NucS (Saccharolobus solfataricus (strain ATCC 35092 / DSM 1617 / JCM 11322 / P2) (Sulfolobus solfataricus)).